The sequence spans 140 residues: Putative nickel-responsive regulator 2 (140 aa).

The Ni(2+) site is built by His-77, His-88, His-90, and Cys-96.

This sequence belongs to the transcriptional regulatory CopG/NikR family. Requires Ni(2+) as cofactor.

Transcriptional regulator. In Methanothermobacter thermautotrophicus (strain ATCC 29096 / DSM 1053 / JCM 10044 / NBRC 100330 / Delta H) (Methanobacterium thermoautotrophicum), this protein is Putative nickel-responsive regulator 2.